Reading from the N-terminus, the 302-residue chain is 4-hydroxy-tetrahydrodipicolinate synthase (302 aa).

T44 contacts pyruvate. Y132 functions as the Proton donor/acceptor in the catalytic mechanism. Residue K160 is the Schiff-base intermediate with substrate of the active site. Position 202 (V202) interacts with pyruvate.

This sequence belongs to the DapA family. As to quaternary structure, homotetramer; dimer of dimers.

Its subcellular location is the cytoplasm. The catalysed reaction is L-aspartate 4-semialdehyde + pyruvate = (2S,4S)-4-hydroxy-2,3,4,5-tetrahydrodipicolinate + H2O + H(+). Its pathway is amino-acid biosynthesis; L-lysine biosynthesis via DAP pathway; (S)-tetrahydrodipicolinate from L-aspartate: step 3/4. Its function is as follows. Catalyzes the condensation of (S)-aspartate-beta-semialdehyde [(S)-ASA] and pyruvate to 4-hydroxy-tetrahydrodipicolinate (HTPA). This Thermomicrobium roseum (strain ATCC 27502 / DSM 5159 / P-2) protein is 4-hydroxy-tetrahydrodipicolinate synthase.